The primary structure comprises 396 residues: L-cysteine desulfidase (396 aa).

Cys23 serves as the catalytic Proton acceptor. Residues Cys288, Cys330, and Cys337 each contribute to the [4Fe-4S] cluster site.

It belongs to the L-cysteine desulfidase family. As to quaternary structure, homotrimer. [4Fe-4S] cluster serves as cofactor.

The enzyme catalyses L-cysteine + H2O = hydrogen sulfide + pyruvate + NH4(+) + H(+). Catalyzes the cleavage of L-cysteine to form 2-aminoprop-2-enoate and sulfide. The former then spontaneously hydrolyzes to pyruvate and NH(3). May be responsible for the production of sulfide required for the biosynthesis of iron-sulfur centers in this archaea. In Methanococcus maripaludis (strain C6 / ATCC BAA-1332), this protein is L-cysteine desulfidase.